We begin with the raw amino-acid sequence, 222 residues long: DnaJ homolog subfamily B member 9 (222 aa).

Positions 1–23 (MATPQSVFVFAICILMITELILA) are cleaved as a signal peptide. A J domain is found at 26–90 (SYYDILGVPK…HRRKEYDTVG (65 aa)). Positions 91–222 (HTAFTNGKGQ…VTTYTDCSGQ (132 aa)) are divergent targeting domain. Ser133 carries the post-translational modification Phosphoserine.

In terms of assembly, interacts with HSPA5/BiP; interaction is direct. Interacts with ERN1/IRE1 (via the luminal region). Interacts with DERL1.

The protein resides in the endoplasmic reticulum lumen. Co-chaperone for Hsp70 protein HSPA5/BiP that acts as a key repressor of the ERN1/IRE1-mediated unfolded protein response (UPR). J domain-containing co-chaperones stimulate the ATPase activity of Hsp70 proteins and are required for efficient substrate recognition by Hsp70 proteins. In the unstressed endoplasmic reticulum, interacts with the luminal region of ERN1/IRE1 and selectively recruits HSPA5/BiP: HSPA5/BiP disrupts the dimerization of the active ERN1/IRE1 luminal region, thereby inactivating ERN1/IRE1. Also involved in endoplasmic reticulum-associated degradation (ERAD) of misfolded proteins. Required for survival of B-cell progenitors and normal antibody production. This is DnaJ homolog subfamily B member 9 from Cricetulus griseus (Chinese hamster).